The sequence spans 277 residues: Phosphate import ATP-binding protein PstB (277 aa).

The 242-residue stretch at 31–272 (IEVPGLSLFY…PAKKQTEDYI (242 aa)) folds into the ABC transporter domain. 63–70 (GPSGCGKS) contributes to the ATP binding site.

It belongs to the ABC transporter superfamily. Phosphate importer (TC 3.A.1.7) family. As to quaternary structure, the complex is composed of two ATP-binding proteins (PstB), two transmembrane proteins (PstC and PstA) and a solute-binding protein (PstS).

It localises to the cell inner membrane. It carries out the reaction phosphate(out) + ATP + H2O = ADP + 2 phosphate(in) + H(+). Its function is as follows. Part of the ABC transporter complex PstSACB involved in phosphate import. Responsible for energy coupling to the transport system. The protein is Phosphate import ATP-binding protein PstB of Pseudomonas fluorescens (strain Pf0-1).